The sequence spans 127 residues: Fluoride-specific ion channel FluC (127 aa).

Helical transmembrane passes span 4 to 24, 35 to 55, 71 to 91, and 103 to 123; these read LLLA…LLSM, LGTL…FAWF, TGFC…VFLL, and VFVN…LFSA. Residues glycine 75 and threonine 78 each contribute to the Na(+) site.

It belongs to the fluoride channel Fluc/FEX (TC 1.A.43) family.

The protein localises to the cell inner membrane. It catalyses the reaction fluoride(in) = fluoride(out). With respect to regulation, na(+) is not transported, but it plays an essential structural role and its presence is essential for fluoride channel function. Fluoride-specific ion channel. Important for reducing fluoride concentration in the cell, thus reducing its toxicity. The sequence is that of Fluoride-specific ion channel FluC from Escherichia coli O17:K52:H18 (strain UMN026 / ExPEC).